Reading from the N-terminus, the 406-residue chain is Phosphoglycerate kinase (406 aa).

Residues 22–24 (DLN), arginine 37, 60–63 (HLGN), arginine 119, and arginine 152 each bind substrate. ATP contacts are provided by residues lysine 202, glutamate 325, and 355-358 (GGDT).

It belongs to the phosphoglycerate kinase family. Monomer.

Its subcellular location is the cytoplasm. The enzyme catalyses (2R)-3-phosphoglycerate + ATP = (2R)-3-phospho-glyceroyl phosphate + ADP. The protein operates within carbohydrate degradation; glycolysis; pyruvate from D-glyceraldehyde 3-phosphate: step 2/5. This Orientia tsutsugamushi (strain Ikeda) (Rickettsia tsutsugamushi) protein is Phosphoglycerate kinase.